The primary structure comprises 92 residues: UPF0237 protein MM_0082 (92 aa).

Residues 7–81 enclose the ACT domain; sequence IITVIGSDRV…KSLGVEVKVQ (75 aa).

It belongs to the UPF0237 family.

The sequence is that of UPF0237 protein MM_0082 from Methanosarcina mazei (strain ATCC BAA-159 / DSM 3647 / Goe1 / Go1 / JCM 11833 / OCM 88) (Methanosarcina frisia).